Here is a 454-residue protein sequence, read N- to C-terminus: Bifunctional protein GlmU (454 aa).

Residues 1 to 230 (MSGRFAVILA…LSETMGVNDR (230 aa)) form a pyrophosphorylase region. UDP-N-acetyl-alpha-D-glucosamine-binding positions include 9-12 (LAAG), Lys23, Gln73, and 78-79 (GT). Asp103 is a binding site for Mg(2+). Residues Gly140, Glu155, Asn170, and Asn228 each coordinate UDP-N-acetyl-alpha-D-glucosamine. Residue Asn228 participates in Mg(2+) binding. Positions 231–251 (VALSQAEAAMRKRINEEWMRQ) are linker. The tract at residues 252 to 454 (GVTIIDPQTT…NKDNYVKKDV (203 aa)) is N-acetyltransferase. UDP-N-acetyl-alpha-D-glucosamine contacts are provided by Arg333 and Lys351. His363 serves as the catalytic Proton acceptor. Residues Tyr366 and Asn377 each coordinate UDP-N-acetyl-alpha-D-glucosamine. Acetyl-CoA contacts are provided by residues 386–387 (NY), Ser405, Ala423, and Arg440.

It in the N-terminal section; belongs to the N-acetylglucosamine-1-phosphate uridyltransferase family. The protein in the C-terminal section; belongs to the transferase hexapeptide repeat family. In terms of assembly, homotrimer. Mg(2+) is required as a cofactor.

It localises to the cytoplasm. The catalysed reaction is alpha-D-glucosamine 1-phosphate + acetyl-CoA = N-acetyl-alpha-D-glucosamine 1-phosphate + CoA + H(+). It catalyses the reaction N-acetyl-alpha-D-glucosamine 1-phosphate + UTP + H(+) = UDP-N-acetyl-alpha-D-glucosamine + diphosphate. It participates in nucleotide-sugar biosynthesis; UDP-N-acetyl-alpha-D-glucosamine biosynthesis; N-acetyl-alpha-D-glucosamine 1-phosphate from alpha-D-glucosamine 6-phosphate (route II): step 2/2. Its pathway is nucleotide-sugar biosynthesis; UDP-N-acetyl-alpha-D-glucosamine biosynthesis; UDP-N-acetyl-alpha-D-glucosamine from N-acetyl-alpha-D-glucosamine 1-phosphate: step 1/1. It functions in the pathway bacterial outer membrane biogenesis; LPS lipid A biosynthesis. Its function is as follows. Catalyzes the last two sequential reactions in the de novo biosynthetic pathway for UDP-N-acetylglucosamine (UDP-GlcNAc). The C-terminal domain catalyzes the transfer of acetyl group from acetyl coenzyme A to glucosamine-1-phosphate (GlcN-1-P) to produce N-acetylglucosamine-1-phosphate (GlcNAc-1-P), which is converted into UDP-GlcNAc by the transfer of uridine 5-monophosphate (from uridine 5-triphosphate), a reaction catalyzed by the N-terminal domain. In Shouchella clausii (strain KSM-K16) (Alkalihalobacillus clausii), this protein is Bifunctional protein GlmU.